The chain runs to 169 residues: Secreted LysM effector Blys5 (169 aa).

The N-terminal stretch at 1-19 (MKLSVISAVFVSLAAAAAA) is a signal peptide. LysM domains lie at 47–94 (TYYQ…YYCV) and 121–167 (QWYK…NVCV).

The protein belongs to the secreted LysM effector family.

Functionally, secreted effector that enables the plant pathogenic fungus to manipulate host defenses for successful infection. Required for the full virulence to infect insect hosts. Protects fungal hyphae against the hydrolytic activity of chitinase and plays an important role in evasion of insect immunities. Binds chitin and can additionally bind chitosan and cellulose. Coats and protects the cell walls of insect pathogens from host cell recognition and additionally shields fungal cells from the hydrolysis of insect chitinases. The chain is Secreted LysM effector Blys5 from Beauveria bassiana (strain ARSEF 2860) (White muscardine disease fungus).